A 4903-amino-acid chain; its full sequence is Histone-lysine N-methyltransferase 2C (4903 aa).

Disordered regions lie at residues Met-1–Ser-116 and Leu-159–Gln-202. The segment covering Gln-13–Ser-28 has biased composition (pro residues). A phosphoserine mark is found at Ser-28 and Ser-46. A DNA-binding region (a.T hook) is located at residues Lys-34–Ser-46. Over residues Arg-50 to Gly-59 the composition is skewed to basic residues. A compositionally biased stretch (acidic residues) spans Glu-64–Val-81. Phosphoserine is present on residues Ser-89 and Ser-113. Polar residues predominate over residues Ser-101–Ser-116. The C2HC pre-PHD-type 1; degenerate zinc-finger motif lies at Glu-226 to Ile-261. 4 PHD-type zinc fingers span residues Glu-282–Ile-330, Asp-340–Cys-390, Cys-387–Cys-437, and Asp-463–Leu-519. Residues Cys-343–Lys-388 form an RING-type zinc finger. Residues Arg-435 to Lys-488 form the DHHC domain. A disordered region spans residues Ser-671–Ser-703. Lys-751 carries the N6-acetyllysine modification. A compositionally biased stretch (basic residues) spans Thr-824–Ser-835. Disordered stretches follow at residues Thr-824–Glu-857 and Gly-882–Lys-904. Residues Gly-838–Pro-848 are compositionally biased toward polar residues. Residue Ser-847 is modified to Phosphoserine. 3 consecutive PHD-type zinc fingers follow at residues Gln-950 to Cys-1003, Cys-1000 to Cys-1050, and Leu-1077 to Tyr-1132. The segment at Ala-1208–Gln-1318 is disordered. The span at Gln-1217–Ile-1263 shows a compositional bias: basic and acidic residues. Position 1294 is a phosphoserine (Ser-1294). The segment covering Pro-1309–Gln-1318 has biased composition (basic and acidic residues). Residues Val-1330–Phe-1352 adopt a coiled-coil conformation. 2 disordered regions span residues Ser-1397–Pro-1419 and His-1447–Thr-1473. 2 stretches are compositionally biased toward polar residues: residues Thr-1406 to Thr-1415 and Ala-1455 to Pro-1471. Position 1497 is an N6-acetyllysine (Lys-1497). Disordered regions lie at residues Asn-1594–Thr-1617 and Val-1698–Glu-1757. Polar residues predominate over residues Asp-1599–Thr-1617. The segment covering Arg-1707–Ser-1717 has biased composition (low complexity). Basic and acidic residues predominate over residues Ser-1718–Phe-1742. A coiled-coil region spans residues Arg-1743–Leu-1790. Residue Lys-1761 is modified to N6-acetyllysine. The segment at Val-1791 to Arg-2375 is disordered. A compositionally biased stretch (polar residues) spans Asp-1796 to Gln-1819. Over residues Pro-1855–Arg-1886 the composition is skewed to low complexity. Phosphoserine is present on Ser-1983. A compositionally biased stretch (polar residues) spans Ile-1986–Asp-2001. Residue Lys-2005 is modified to N6-acetyllysine. 3 stretches are compositionally biased toward polar residues: residues Gly-2113–Tyr-2124, Ser-2137–Pro-2151, and Gly-2325–Pro-2334. Low complexity predominate over residues Val-2335–Gln-2347. Residues Ser-2355 to Ala-2369 are compositionally biased toward polar residues. Arg-2447 and Arg-2563 each carry asymmetric dimethylarginine. Disordered stretches follow at residues Arg-2561–Glu-2668, Lys-2702–Asn-2736, and Val-2786–Asp-2844. Composition is skewed to polar residues over residues Gln-2602–Leu-2611, Pro-2621–Ile-2636, and Pro-2653–Glu-2668. A compositionally biased stretch (basic and acidic residues) spans Pro-2788–Gln-2807. N6-acetyllysine is present on residues Lys-2796 and Lys-2803. Ser-2822 bears the Phosphoserine mark. The residue at position 2824 (Tyr-2824) is a Phosphotyrosine. Positions Ser-2825–Ala-2843 are enriched in basic and acidic residues. N6-acetyllysine is present on residues Lys-2826 and Lys-2862. The interval Glu-2920–Ile-2953 is disordered. The segment covering Pro-2929–Ser-2942 has biased composition (low complexity). Coiled-coil stretches lie at residues Leu-3047–Glu-3074 and Asn-3166–Glu-3193. Residues His-3198–Lys-3214 show a composition bias toward basic residues. The disordered stretch occupies residues His-3198–Asp-3223. Coiled-coil stretches lie at residues Ala-3224–Ala-3270 and Phe-3387–Leu-3432. Disordered regions lie at residues Pro-3329–Gln-3407 and Ser-3444–Ala-3910. Positions Phe-3391–Gln-3407 are enriched in basic and acidic residues. Over residues Leu-3464–Gln-3485 the composition is skewed to low complexity. Composition is skewed to polar residues over residues Gly-3486–Arg-3503, Pro-3515–Phe-3524, Pro-3557–Gln-3586, and Leu-3632–Leu-3647. Basic and acidic residues-rich tracts occupy residues Ala-3697–Asp-3739 and Ser-3795–Glu-3804. Lys-3709 carries the N6-acetyllysine modification. Positions Met-3871–Asn-3885 are enriched in polar residues. Residues Pro-3890–Met-3904 are compositionally biased toward pro residues. Residue Ser-4027 is modified to Phosphoserine. Arg-4132 is modified (asymmetric dimethylarginine). The disordered stretch occupies residues Pro-4159–Ala-4184. Ser-4260 is subject to Phosphoserine. The segment at Cys-4391–Val-4431 adopts a C2HC pre-PHD-type 2 zinc-finger fold. The PHD-type 8 zinc-finger motif lies at Met-4452–Lys-4499. In terms of domain architecture, FYR N-terminal spans Asp-4537–Lys-4597. The 86-residue stretch at Asp-4598–Tyr-4683 folds into the FYR C-terminal domain. The WDR5 interaction motif (WIN) signature appears at Gly-4699–Glu-4704. Positions Ser-4763–Lys-4879 constitute an SET domain. S-adenosyl-L-methionine contacts are provided by residues Tyr-4817 and Asn-4840–His-4841. Zn(2+)-binding residues include Cys-4843, Cys-4891, Cys-4893, and Cys-4898. In terms of domain architecture, Post-SET spans His-4887 to Asn-4903.

Belongs to the class V-like SAM-binding methyltransferase superfamily. Histone-lysine methyltransferase family. TRX/MLL subfamily. In terms of assembly, component of the MLL3 complex (also named ASCOM complex), at least composed of catalytic subunit KMT2C/MLL3, ASH2L, RBBP5, WDR5, NCOA6, DPY30, KDM6A, PAXIP1/PTIP, PAGR1 and alpha- and beta-tubulin. Forms a core complex with the evolutionary conserved subcomplex WRAD composed of WDR5, RBBP5, ASH2L/ASH2 and DPY30 subunits; WRAD differentially stimulates the methyltransferase activity. Interacts (via WIN motif) with WDR5. As to expression, in adult, detected in testis, kidney, spleen and lung, weakly expressed in brain and absent in heart and liver. First detected throughout the embryo at 8 dpc when expression is strong in forebrain neuroepithelium and absent in heart. Expressed in the eye lens between 10 and 14.5 dpc. By 13 dpc, expressed strongly in spinal cord, hand/foot plates and gonads.

It is found in the nucleus. It catalyses the reaction L-lysyl(4)-[histone H3] + S-adenosyl-L-methionine = N(6)-methyl-L-lysyl(4)-[histone H3] + S-adenosyl-L-homocysteine + H(+). Its function is as follows. Histone methyltransferase that catalyzes methyl group transfer from S-adenosyl-L-methionine to the epsilon-amino group of 'Lys-4' of histone H3 (H3K4). Part of chromatin remodeling machinery predominantly forms H3K4me1 methylation marks at active chromatin sites where transcription and DNA repair take place. Likely plays a redundant role with KMT2D in enriching H3K4me1 mark on primed and active enhancer elements. The sequence is that of Histone-lysine N-methyltransferase 2C (Kmt2c) from Mus musculus (Mouse).